Here is a 287-residue protein sequence, read N- to C-terminus: Mitochondrial dicarboxylate carrier (287 aa).

Solcar repeat units follow at residues 7–87 (SRWY…MRDY), 100–187 (NKVL…AKQL), and 196–279 (DNIF…LRKH). 3 helical membrane-spanning segments follow: residues 9–29 (WYFGGLASCGAACCTHPLDLL), 62–81 (GLSASLCRQMTYSLTRFAIY), and 102–122 (VLLGGISGLTGGFVGTPADLV). Lys158 bears the N6-acetyllysine mark. 3 helical membrane-spanning segments follow: residues 162-181 (GATMASSRGALVTVGQLSCY), 202-222 (FVSSFIAGGCATFLCQPLDVL), and 254-274 (GLFPAGIRLIPHTVLTFMFLE).

This sequence belongs to the mitochondrial carrier (TC 2.A.29) family. In terms of tissue distribution, expressed at very high levels in white adipose tissue. And at low levels in brown adipose tissue, kidney and liver.

The protein resides in the mitochondrion inner membrane. The catalysed reaction is (S)-malate(in) + phosphate(out) = (S)-malate(out) + phosphate(in). It carries out the reaction malonate(out) + (S)-malate(in) = malonate(in) + (S)-malate(out). The enzyme catalyses (S)-malate(in) + succinate(out) = (S)-malate(out) + succinate(in). It catalyses the reaction (S)-malate(in) + sulfate(out) = (S)-malate(out) + sulfate(in). The catalysed reaction is malonate(out) + phosphate(in) = malonate(in) + phosphate(out). It carries out the reaction succinate(out) + phosphate(in) = succinate(in) + phosphate(out). The enzyme catalyses sulfate(out) + phosphate(in) = sulfate(in) + phosphate(out). It catalyses the reaction malonate(out) + succinate(in) = malonate(in) + succinate(out). Regulated by circadian protein CLOCK (Circadian Locomotor Output Cycles Kaput). In terms of biological role, catalyzes the electroneutral exchange or flux of physiologically important metabolites such as dicarboxylates (malonate, malate, succinate), inorganic sulfur-containing anions, and phosphate, across mitochondrial inner membrane. Plays an important role in gluconeogenesis, fatty acid metabolism, urea synthesis, and sulfur metabolism, particularly in liver, by supplying the substrates for the different metabolic processes. Regulates fatty acid release from adipocytes, and contributes to systemic insulin sensitivity. The sequence is that of Mitochondrial dicarboxylate carrier from Mus musculus (Mouse).